The following is a 555-amino-acid chain: Probable Xaa-Pro aminopeptidase BC1G_13431 (555 aa).

Positions 303, 314, 458, and 499 each coordinate Mn(2+). The tract at residues 527-555 is disordered; that stretch reads EGKEQEEEEEREANRKATESRKQKKTWFW. Over residues 538–547 the composition is skewed to basic and acidic residues; the sequence is EANRKATESR.

Belongs to the peptidase M24B family. Requires Mn(2+) as cofactor.

The catalysed reaction is Release of any N-terminal amino acid, including proline, that is linked to proline, even from a dipeptide or tripeptide.. Its function is as follows. Catalyzes the removal of a penultimate prolyl residue from the N-termini of peptides. The sequence is that of Probable Xaa-Pro aminopeptidase BC1G_13431 from Botryotinia fuckeliana (strain B05.10) (Noble rot fungus).